The following is a 231-amino-acid chain: Large ribosomal subunit protein uL1 (231 aa).

Belongs to the universal ribosomal protein uL1 family. As to quaternary structure, part of the 50S ribosomal subunit.

In terms of biological role, binds directly to 23S rRNA. The L1 stalk is quite mobile in the ribosome, and is involved in E site tRNA release. Functionally, protein L1 is also a translational repressor protein, it controls the translation of the L11 operon by binding to its mRNA. The sequence is that of Large ribosomal subunit protein uL1 from Pseudomonas entomophila (strain L48).